The chain runs to 619 residues: Probable pectinesterase/pectinesterase inhibitor 25 (619 aa).

The first 23 residues, 1 to 23 (MKMQTLNFTSSLLFLSFIFLSCA), serve as a signal peptide directing secretion. The tract at residues 31–84 (SPSQPHSEPPSQLPFEPPVESPFFPPSQPPIFVPPSQPPSLPPSQSQSPSLACK) is disordered. Residues 37–72 (SEPPSQLPFEPPVESPFFPPSQPPIFVPPSQPPSLP) are compositionally biased toward pro residues. The tract at residues 73–231 (PSQSQSPSLA…TRLYSISLGL (159 aa)) is pectinesterase inhibitor 25. N-linked (GlcNAc...) asparagine glycosylation is found at N220, N255, N312, N325, and N364. Residues 302–601 (AVIVGPFKSD…FTVYNFTMGD (300 aa)) form a pectinesterase 25 region. Residue T380 coordinates substrate. N382 carries N-linked (GlcNAc...) asparagine glycosylation. Q410 contributes to the substrate binding site. D433 functions as the Proton donor; for pectinesterase activity in the catalytic mechanism. C447 and C467 are joined by a disulfide. The active-site Nucleophile; for pectinesterase activity is D454. An N-linked (GlcNAc...) asparagine glycan is attached at N500. The substrate site is built by R522 and W524. N550, N591, and N596 each carry an N-linked (GlcNAc...) asparagine glycan.

It in the N-terminal section; belongs to the PMEI family. In the C-terminal section; belongs to the pectinesterase family. As to expression, expressed in siliques.

The protein localises to the secreted. It localises to the cell wall. It carries out the reaction [(1-&gt;4)-alpha-D-galacturonosyl methyl ester](n) + n H2O = [(1-&gt;4)-alpha-D-galacturonosyl](n) + n methanol + n H(+). Its pathway is glycan metabolism; pectin degradation; 2-dehydro-3-deoxy-D-gluconate from pectin: step 1/5. Its function is as follows. Acts in the modification of cell walls via demethylesterification of cell wall pectin. The protein is Probable pectinesterase/pectinesterase inhibitor 25 (PME25) of Arabidopsis thaliana (Mouse-ear cress).